Consider the following 71-residue polypeptide: Small ribosomal subunit protein bS21 (71 aa).

The span at 49–59 (AAAAVKRHAKK) shows a compositional bias: basic residues. The tract at residues 49-71 (AAAAVKRHAKKVQREQRRSVRLY) is disordered. The span at 60-71 (VQREQRRSVRLY) shows a compositional bias: basic and acidic residues.

This sequence belongs to the bacterial ribosomal protein bS21 family.

The polypeptide is Small ribosomal subunit protein bS21 (Stutzerimonas stutzeri (strain A1501) (Pseudomonas stutzeri)).